Consider the following 696-residue polypeptide: Chitin synthase regulator SKT5 (696 aa).

Disordered stretches follow at residues 37-67 (GQDF…SANQ) and 90-145 (QEED…IKKR). Basic and acidic residues predominate over residues 41–53 (SDNKENRENRDNE). Positions 104 to 126 (LNNSNNTSLSSLGSTPTNSPSPG) are enriched in low complexity. Residues 129–139 (RQTNSSTSLTK) are compositionally biased toward polar residues. Ser148 bears the Phosphoserine mark. Sel1-like repeat units follow at residues 271–306 (SDAQ…KHGH), 307–342 (IESA…SRNH), 343–382 (PSAM…ARAN), 386–423 (AAAP…SLGH), 424–460 (VPSA…LKGD), 461–498 (SVAM…NAGL), and 499–534 (PKAQ…GNED). Ser561 and Ser563 each carry phosphoserine. The residue at position 564 (Thr564) is a Phosphothreonine. Composition is skewed to polar residues over residues 576–593 (SNVG…TFFT), 605–634 (LQIN…SSAK), and 651–661 (VSLSNMGSSNM). Residues 576–696 (SNVGSNSRVS…GKKKKDCVIM (121 aa)) form a disordered region. Positions 662-675 (IRKDFPAVKTESKK) are enriched in basic and acidic residues. The segment covering 680 to 696 (KNKKDKQGKKKKDCVIM) has biased composition (basic residues). At Cys693 the chain carries Cysteine methyl ester. The S-farnesyl cysteine moiety is linked to residue Cys693. The propeptide at 694–696 (VIM) is removed in mature form.

Belongs to the SKT5 family. May interact with CHS3 and seems to be an adapter (along with BNI4) to link CHS3 to septins. In terms of processing, farnesylation is required for chitin synthase CHS3 activity but is not required for SKT5 membrane association.

The protein localises to the cell membrane. In terms of biological role, activator of the chitin synthase CHS3 which polymerizes chitin, a structural polymer of the fungal cell wall. This chain is Chitin synthase regulator SKT5, found in Saccharomyces cerevisiae (strain ATCC 204508 / S288c) (Baker's yeast).